Consider the following 162-residue polypeptide: Cyanate hydratase (162 aa).

Active-site residues include Arg102, Glu105, and Ser128.

It belongs to the cyanase family.

It catalyses the reaction cyanate + hydrogencarbonate + 3 H(+) = NH4(+) + 2 CO2. Functionally, catalyzes the reaction of cyanate with bicarbonate to produce ammonia and carbon dioxide. This is Cyanate hydratase from Mycosarcoma maydis (Corn smut fungus).